The chain runs to 400 residues: Golgin-45 (400 aa).

The span at 1 to 16 shows a compositional bias: polar residues; the sequence is MTTKNLETKVTVTSSP. The segment at 1–58 is disordered; that stretch reads MTTKNLETKVTVTSSPIRGAGDGMETEEPPKSVEVTSGVQSRKHHSLQSPWKKAVPSE. S15 carries the post-translational modification Phosphoserine. The short motif at 18–22 is the Tankyrase-binding motif element; that stretch reads RGAGD. The residue at position 49 (S49) is a Phosphoserine. Residues 120–213 are a coiled coil; sequence NKELSEVKNV…QLERMSIQCD (94 aa). The residue at position 348 (T348) is a Phosphothreonine. The residue at position 353 (S353) is a Phosphoserine. The interval 394–400 is essential for interaction with GORASP2; sequence RGELIAL.

In terms of assembly, interacts with GORASP2. Interacts with the GTP-bound form of RAB2, but not with other Golgi Rab proteins. Identified in a complex with RAB2 and GORASP2. In terms of processing, ADP-ribosylated by tankyrase TNKS and TNKS2. Poly-ADP-ribosylated protein is recognized by RNF146, followed by ubiquitination. Post-translationally, ubiquitinated by RNF146 when poly-ADP-ribosylated, leading to its degradation. Detected in adrenal gland.

It localises to the golgi apparatus membrane. The protein localises to the nucleus. Its subcellular location is the cytoplasm. Required for normal Golgi structure and for protein transport from the endoplasmic reticulum (ER) through the Golgi apparatus to the cell surface. This chain is Golgin-45 (BLZF1), found in Homo sapiens (Human).